Here is a 357-residue protein sequence, read N- to C-terminus: Protein RecA (357 aa).

67–74 (GPESSGKT) provides a ligand contact to ATP. Positions 335-357 (LSSSASDDENSEGNVDFETGEVF) are disordered.

This sequence belongs to the RecA family.

The protein resides in the cytoplasm. Its function is as follows. Can catalyze the hydrolysis of ATP in the presence of single-stranded DNA, the ATP-dependent uptake of single-stranded DNA by duplex DNA, and the ATP-dependent hybridization of homologous single-stranded DNAs. It interacts with LexA causing its activation and leading to its autocatalytic cleavage. This chain is Protein RecA, found in Shewanella sp. (strain MR-4).